The primary structure comprises 102 residues: Circadian clock oscillator protein KaiA (102 aa).

Residues 1–102 (MTQEVDQQIL…CEAYRGAIFK (102 aa)) enclose the KaiA C-terminal domain.

It belongs to the KaiA family. Homodimer. The KaiABC complex composition changes during the circadian cycle to control KaiC phosphorylation. Complexes KaiC(6), KaiA(2-4):KaiC(6), KaiB(6):KaiC(6) and KaiC(6):KaiB(6):KaiA(12) are among the most important forms, many form cooperatively. KaiA and CikA bind to the same region of the KaiB(fs) form and therefore compete.

In terms of biological role, key component of the KaiABC oscillator complex, which constitutes the main circadian regulator in cyanobacteria. Complex composition changes during the circadian cycle to control KaiC phosphorylation. KaiA stimulates KaiC autophosphorylation, while KaiB sequesters KaiA, leading to KaiC autodephosphorylation. KaiA binding to the KaiC CII domain during the subjective day yields KaiA(2-4):KaiC(6) complexes which stimulate KaiC autophosphorylation. Phospho-Ser-431 KaiC accumulation triggers binding of KaiB during the subjective night to form the KaiB(6):KaiC(6) complex, leading to changes in the output regulators CikA and SasA. KaiB(6):KaiC(6) formation exposes a site for KaiA binding on KaiB that sequesters KaiA from KaiC's CII domain, making the KaiC(6):KaiB(6):KaiA(12) complex resulting in KaiC autodephosphorylation. Complete dephosphorylation of KaiC leads to dissociation of KaiA(2):KaiB(1), completing 1 cycle of the Kai oscillator. In Nostoc sp. (strain PCC 7120 / SAG 25.82 / UTEX 2576), this protein is Circadian clock oscillator protein KaiA.